We begin with the raw amino-acid sequence, 320 residues long: Tetraspanin-32 (320 aa).

4 helical membrane-spanning segments follow: residues 14-34 (MLVT…MVTL), 60-80 (WAFS…VLSA), 90-110 (LMAG…QVVF), and 203-223 (SIGL…WFAI).

This sequence belongs to the tetraspanin (TM4SF) family. Expressed ubiquitously at low levels. High levels of expression are confined to hematopoietic tissues including peripheral blood leukocytes, thymus and spleen.

Its subcellular location is the membrane. The sequence is that of Tetraspanin-32 (TSPAN32) from Homo sapiens (Human).